Here is a 296-residue protein sequence, read N- to C-terminus: Phosphoribosylaminoimidazole-succinocarboxamide synthase (296 aa).

Belongs to the SAICAR synthetase family.

The catalysed reaction is 5-amino-1-(5-phospho-D-ribosyl)imidazole-4-carboxylate + L-aspartate + ATP = (2S)-2-[5-amino-1-(5-phospho-beta-D-ribosyl)imidazole-4-carboxamido]succinate + ADP + phosphate + 2 H(+). It functions in the pathway purine metabolism; IMP biosynthesis via de novo pathway; 5-amino-1-(5-phospho-D-ribosyl)imidazole-4-carboxamide from 5-amino-1-(5-phospho-D-ribosyl)imidazole-4-carboxylate: step 1/2. This Geobacter metallireducens (strain ATCC 53774 / DSM 7210 / GS-15) protein is Phosphoribosylaminoimidazole-succinocarboxamide synthase.